Consider the following 50-residue polypeptide: Sperm protamine P1 (50 aa).

It belongs to the protamine P1 family. In terms of tissue distribution, testis.

It is found in the nucleus. It localises to the chromosome. Protamines substitute for histones in the chromatin of sperm during the haploid phase of spermatogenesis. They compact sperm DNA into a highly condensed, stable and inactive complex. This is Sperm protamine P1 (PRM1) from Trachypithecus phayrei (Phayre's leaf monkey).